Reading from the N-terminus, the 328-residue chain is Fructose-1,6-bisphosphatase class 1 (328 aa).

Mg(2+) contacts are provided by Glu91, Asp110, Leu112, and Asp113. Residues 113–116 (DGSS), Asn205, and 257–259 (YLY) contribute to the substrate site. Residue Glu277 coordinates Mg(2+).

It belongs to the FBPase class 1 family. Homotetramer. Requires Mg(2+) as cofactor.

It localises to the cytoplasm. It catalyses the reaction beta-D-fructose 1,6-bisphosphate + H2O = beta-D-fructose 6-phosphate + phosphate. The protein operates within carbohydrate biosynthesis; gluconeogenesis. This chain is Fructose-1,6-bisphosphatase class 1, found in Azorhizobium caulinodans (strain ATCC 43989 / DSM 5975 / JCM 20966 / LMG 6465 / NBRC 14845 / NCIMB 13405 / ORS 571).